A 633-amino-acid polypeptide reads, in one-letter code: MSDETHHSPDGKMSIRKLSYLAVGSVGVVYGDIGTSPLYAFREALKPVAADGLTRGEVISLVSLMFWALTIIVTMKYVLFLLRADNDGEGGTLSLLALLMKTANGHTAVLMLLGLLGAALFLGDAMITPALSVLSAVEGLKLVTPTLSDYIVPISVAILALLFAIQSHGTGAVARFFGPITAIWFIVMGLAGIMHIADDYGILAALNPWYAVNFLMNEGFLGVVVLGAVFLTVTGAEALYADLGHFGRRPIQWAWFVLVFPSLTLNYLGQGALVLREPLAMSDPFFLMYPHWALLPVVILATMATIIASQAVITGAFSLTRQAIHLGFLPRMEILITSETNTGQIFLPSVNAILFFGVIFLVLSFKTSDALATAYGISVTGAMVVTSIMAFEFVRVRWNWTLPMAIAVLTPLLLLEFVFLGANLLKIHDGGYVPVLIATAFTVIMWTWRRGSAILMEKTRHTDIPLSSFVSSIERKSDHSPAHVPGTAIFLTSDPESAPAALLHNLKHNHVLHDKNVILTIRTTNKPRVPQEDRYSVEKVSDRFSRVELRFGFMESQNVSQALATLRKTGLKFDIMSTSFYLGRRKLVPDAKSGMPHWQDRLYIALANAATDPSDYFRLPANRVVELGSHVII.

Transmembrane regions (helical) follow at residues 21-41, 61-81, 107-127, 145-165, 176-196, 219-239, 255-275, 293-313, 345-365, 371-391, 402-422, and 427-447; these read LAVG…LYAF, LVSL…VLFL, TAVL…DAMI, PTLS…LFAI, FFGP…IMHI, GFLG…AEAL, WFVL…ALVL, ALLP…QAVI, IFLP…VLSF, LATA…IMAF, LPMA…FLGA, and IHDG…IMWT.

The protein belongs to the HAK/KUP transporter (TC 2.A.72) family.

The protein localises to the cell inner membrane. The enzyme catalyses K(+)(in) + H(+)(in) = K(+)(out) + H(+)(out). Transport of potassium into the cell. Likely operates as a K(+):H(+) symporter. The chain is Probable potassium transport system protein Kup from Rhizobium rhizogenes (strain K84 / ATCC BAA-868) (Agrobacterium radiobacter).